A 699-amino-acid chain; its full sequence is Ciliated left-right organizer metallopeptidase (699 aa).

Residues 1-18 (MKMWRLLLLGVATGRCLH) form the signal peptide. Topologically, residues 19–663 (EETQKSVRLL…SLDHNPSMTE (645 aa)) are extracellular. Residue His238 coordinates Zn(2+). The active site involves Glu239. Zn(2+) contacts are provided by His242 and His318. Residues 664 to 684 (LLLSTGFCLLVLILVGALGTL) form a helical membrane-spanning segment. Topologically, residues 685–699 (AYQKRAMLQVAPSTT) are cytoplasmic.

The protein belongs to the peptidase M8 family. Requires Zn(2+) as cofactor. Specifically expressed in ciliated left-right organizer.

The protein resides in the membrane. Functionally, putative metalloproteinase that plays a role in left-right patterning process. This chain is Ciliated left-right organizer metallopeptidase, found in Mus musculus (Mouse).